A 173-amino-acid polypeptide reads, in one-letter code: Pathogenesis-related protein 1A/1B (173 aa).

Positions Met1 to Ala20 are cleaved as a signal peptide.

Belongs to the thaumatin family.

This is Pathogenesis-related protein 1A/1B from Hordeum vulgare (Barley).